Consider the following 368-residue polypeptide: Phospho-N-acetylmuramoyl-pentapeptide-transferase (368 aa).

The next 9 membrane-spanning stretches (helical) occupy residues 23–43 (YLTF…IFAG), 72–92 (VPTM…FLWA), 98–118 (HVWL…IDDY), 139–159 (VTLG…SVLL), 170–190 (LSVD…TAVS), 201–221 (GLAA…AYLC), 238–258 (AGEV…FLWF), 281–301 (VIAL…VFFV), and 345–365 (KIVI…LMTL).

It belongs to the glycosyltransferase 4 family. MraY subfamily. Requires Mg(2+) as cofactor.

The protein resides in the cell inner membrane. It catalyses the reaction UDP-N-acetyl-alpha-D-muramoyl-L-alanyl-gamma-D-glutamyl-meso-2,6-diaminopimeloyl-D-alanyl-D-alanine + di-trans,octa-cis-undecaprenyl phosphate = di-trans,octa-cis-undecaprenyl diphospho-N-acetyl-alpha-D-muramoyl-L-alanyl-D-glutamyl-meso-2,6-diaminopimeloyl-D-alanyl-D-alanine + UMP. It functions in the pathway cell wall biogenesis; peptidoglycan biosynthesis. Functionally, catalyzes the initial step of the lipid cycle reactions in the biosynthesis of the cell wall peptidoglycan: transfers peptidoglycan precursor phospho-MurNAc-pentapeptide from UDP-MurNAc-pentapeptide onto the lipid carrier undecaprenyl phosphate, yielding undecaprenyl-pyrophosphoryl-MurNAc-pentapeptide, known as lipid I. In Chlorobaculum tepidum (strain ATCC 49652 / DSM 12025 / NBRC 103806 / TLS) (Chlorobium tepidum), this protein is Phospho-N-acetylmuramoyl-pentapeptide-transferase.